A 154-amino-acid polypeptide reads, in one-letter code: Myoglobin (154 aa).

The region spanning 2 to 148 is the Globin domain; it reads GLSEAEWQLV…FRKDIAAKYK (147 aa). Ser4 carries the phosphoserine modification. Nitrite is bound at residue His65. An O2-binding site is contributed by His65. Residue Thr68 is modified to Phosphothreonine. Residue His94 coordinates heme b.

Belongs to the globin family. As to quaternary structure, monomeric.

The protein resides in the cytoplasm. The protein localises to the sarcoplasm. The enzyme catalyses Fe(III)-heme b-[protein] + nitric oxide + H2O = Fe(II)-heme b-[protein] + nitrite + 2 H(+). The catalysed reaction is H2O2 + AH2 = A + 2 H2O. Functionally, monomeric heme protein which primary function is to store oxygen and facilitate its diffusion within muscle tissues. Reversibly binds oxygen through a pentacoordinated heme iron and enables its timely and efficient release as needed during periods of heightened demand. Depending on the oxidative conditions of tissues and cells, and in addition to its ability to bind oxygen, it also has a nitrite reductase activity whereby it regulates the production of bioactive nitric oxide. Under stress conditions, like hypoxia and anoxia, it also protects cells against reactive oxygen species thanks to its pseudoperoxidase activity. This is Myoglobin (MB) from Mesoplodon carlhubbsi (Hubb's beaked whale).